Consider the following 51-residue polypeptide: Sperm protamine P1 (51 aa).

Disulfide bonds link C7/C15 and C38/C48.

This sequence belongs to the protamine P1 family. Cross-linked by interchain disulfide bonds around the DNA-helix. Phosphorylated by SRPK1. Testis.

It localises to the nucleus. The protein localises to the chromosome. Functionally, protamines substitute for histones in the chromatin of sperm during the haploid phase of spermatogenesis. They compact sperm DNA into a highly condensed, stable and inactive complex. In Rattus norvegicus (Rat), this protein is Sperm protamine P1 (Prm1).